A 563-amino-acid chain; its full sequence is Arginine--tRNA ligase (563 aa).

This sequence belongs to the class-I aminoacyl-tRNA synthetase family. Monomer.

It carries out the reaction tRNA(Arg) + L-arginine + ATP = L-arginyl-tRNA(Arg) + AMP + diphosphate. The protein is Arginine--tRNA ligase of Encephalitozoon cuniculi (strain GB-M1) (Microsporidian parasite).